Consider the following 445-residue polypeptide: Probable glycine dehydrogenase (decarboxylating) subunit 1 (445 aa).

This sequence belongs to the GcvP family. N-terminal subunit subfamily. In terms of assembly, the glycine cleavage system is composed of four proteins: P, T, L and H. In this organism, the P 'protein' is a heterodimer of two subunits.

It carries out the reaction N(6)-[(R)-lipoyl]-L-lysyl-[glycine-cleavage complex H protein] + glycine + H(+) = N(6)-[(R)-S(8)-aminomethyldihydrolipoyl]-L-lysyl-[glycine-cleavage complex H protein] + CO2. The glycine cleavage system catalyzes the degradation of glycine. The P protein binds the alpha-amino group of glycine through its pyridoxal phosphate cofactor; CO(2) is released and the remaining methylamine moiety is then transferred to the lipoamide cofactor of the H protein. In Chlorobium chlorochromatii (strain CaD3), this protein is Probable glycine dehydrogenase (decarboxylating) subunit 1.